We begin with the raw amino-acid sequence, 123 residues long: UPF0102 protein APJL_1381 (123 aa).

The protein belongs to the UPF0102 family.

The sequence is that of UPF0102 protein APJL_1381 from Actinobacillus pleuropneumoniae serotype 3 (strain JL03).